We begin with the raw amino-acid sequence, 1370 residues long: Major capsid protein (1370 aa).

The protein belongs to the herpesviridae major capsid protein family. Homomultimer. Makes the hexons and eleven out of twelve pentons. Interacts with triplex proteins 1/TRX1 and 2/TRX2; adjacent capsomers are linked together in groups of three by triplexes, heterotrimeric complexes composed of one molecule of TRX1 and two molecules of TRX2. Interacts with scaffold protein; this interaction allows efficient MCP transport to the host nucleus. Interacts with capsid vertex component 2/CVC2. Interacts with the small capsomere-interacting protein/SCP.

It is found in the virion. It localises to the host nucleus. Self-assembles to form an icosahedral capsid with a T=16 symmetry, about 200 nm in diameter, and consisting of 150 hexons and 12 pentons (total of 162 capsomers). Hexons form the edges and faces of the capsid and are each composed of six MCP molecules. In contrast, one penton is found at each of the 12 vertices. Eleven of the pentons are MCP pentamers, while the last vertex is occupied by the portal complex. The capsid is surrounded by a layer of proteinaceous material designated the tegument which, in turn, is enclosed in an envelope of host cell-derived lipids containing virus-encoded glycoproteins. This Human cytomegalovirus (strain AD169) (HHV-5) protein is Major capsid protein.